A 130-amino-acid polypeptide reads, in one-letter code: MEKLEKTLEEWRSMLDPEQYNVCRLKGTERPFSGKYNGTKTDGVYHCICCNEPLFDSKAKFDSGCGWPSFYEPIADSAMVEIRDMSHGMIRTEVVCAKCDAHLGHVFPDGPPPTGLRYCINSVCLDLVPR.

The 123-residue stretch at 8-130 (LEEWRSMLDP…NSVCLDLVPR (123 aa)) folds into the MsrB domain. Residues Cys-47, Cys-50, Cys-96, and Cys-99 each contribute to the Zn(2+) site. The Nucleophile role is filled by Cys-119.

Belongs to the MsrB Met sulfoxide reductase family. Zn(2+) serves as cofactor.

It catalyses the reaction L-methionyl-[protein] + [thioredoxin]-disulfide + H2O = L-methionyl-(R)-S-oxide-[protein] + [thioredoxin]-dithiol. The polypeptide is Peptide methionine sulfoxide reductase MsrB (Pseudomonas fluorescens (strain ATCC BAA-477 / NRRL B-23932 / Pf-5)).